The chain runs to 413 residues: SWIRM domain-containing protein FUN19 (413 aa).

Residues 35–51 (KASNNNNDSNKNGLNMS) show a composition bias toward low complexity. 3 disordered regions span residues 35 to 55 (KASN…DYSN), 189 to 211 (YNDD…PLAS), and 249 to 271 (YSPQ…PSAS). Threonine 194 is modified (phosphothreonine). A compositionally biased stretch (low complexity) spans 200–211 (SSSSRLPSPLAS). 2 positions are modified to phosphoserine: serine 207 and serine 211. The 98-residue stretch at 316 to 413 (LKIEWKGSPM…LQDSNFTKYL (98 aa)) folds into the SWIRM domain.

The sequence is that of SWIRM domain-containing protein FUN19 (FUN19) from Saccharomyces cerevisiae (strain ATCC 204508 / S288c) (Baker's yeast).